Consider the following 94-residue polypeptide: Exodeoxyribonuclease 7 small subunit (94 aa).

This sequence belongs to the XseB family. In terms of assembly, heterooligomer composed of large and small subunits.

It localises to the cytoplasm. The enzyme catalyses Exonucleolytic cleavage in either 5'- to 3'- or 3'- to 5'-direction to yield nucleoside 5'-phosphates.. Functionally, bidirectionally degrades single-stranded DNA into large acid-insoluble oligonucleotides, which are then degraded further into small acid-soluble oligonucleotides. This Trichormus variabilis (strain ATCC 29413 / PCC 7937) (Anabaena variabilis) protein is Exodeoxyribonuclease 7 small subunit.